We begin with the raw amino-acid sequence, 291 residues long: Light-independent protochlorophyllide reductase iron-sulfur ATP-binding protein (291 aa).

Residues 10-15 and Lys-39 contribute to the ATP site; that span reads GIGKST. Ser-14 lines the Mg(2+) pocket. [4Fe-4S] cluster is bound by residues Cys-95 and Cys-129. Position 180–181 (180–181) interacts with ATP; sequence NR.

The protein belongs to the NifH/BchL/ChlL family. Homodimer. Protochlorophyllide reductase is composed of three subunits; ChlL, ChlN and ChlB. [4Fe-4S] cluster serves as cofactor.

The protein localises to the plastid. Its subcellular location is the chloroplast. It catalyses the reaction chlorophyllide a + oxidized 2[4Fe-4S]-[ferredoxin] + 2 ADP + 2 phosphate = protochlorophyllide a + reduced 2[4Fe-4S]-[ferredoxin] + 2 ATP + 2 H2O. The protein operates within porphyrin-containing compound metabolism; chlorophyll biosynthesis (light-independent). Functionally, component of the dark-operative protochlorophyllide reductase (DPOR) that uses Mg-ATP and reduced ferredoxin to reduce ring D of protochlorophyllide (Pchlide) to form chlorophyllide a (Chlide). This reaction is light-independent. The L component serves as a unique electron donor to the NB-component of the complex, and binds Mg-ATP. The chain is Light-independent protochlorophyllide reductase iron-sulfur ATP-binding protein from Pinus thunbergii (Japanese black pine).